A 158-amino-acid chain; its full sequence is Transcription elongation factor GreA (158 aa).

Positions 47–68 form a coiled coil; the sequence is AEYDAAKEAQGLLELKIKKMEE.

This sequence belongs to the GreA/GreB family.

In terms of biological role, necessary for efficient RNA polymerase transcription elongation past template-encoded arresting sites. The arresting sites in DNA have the property of trapping a certain fraction of elongating RNA polymerases that pass through, resulting in locked ternary complexes. Cleavage of the nascent transcript by cleavage factors such as GreA or GreB allows the resumption of elongation from the new 3'terminus. GreA releases sequences of 2 to 3 nucleotides. The sequence is that of Transcription elongation factor GreA from Flavobacterium psychrophilum (strain ATCC 49511 / DSM 21280 / CIP 103535 / JIP02/86).